The chain runs to 438 residues: uncharacterized protein (438 aa).

H59 provides a ligand contact to Zn(2+). E62 serves as the catalytic Proton acceptor. Zn(2+)-binding residues include H63 and E139.

It belongs to the peptidase M16 family. The cofactor is Zn(2+).

This is an uncharacterized protein from Mycobacterium bovis (strain ATCC BAA-935 / AF2122/97).